The sequence spans 302 residues: Acetylglutamate kinase (302 aa).

Substrate is bound by residues 67–68, arginine 89, and asparagine 194; that span reads GG.

Belongs to the acetylglutamate kinase family. ArgB subfamily.

It localises to the cytoplasm. The enzyme catalyses N-acetyl-L-glutamate + ATP = N-acetyl-L-glutamyl 5-phosphate + ADP. Its pathway is amino-acid biosynthesis; L-arginine biosynthesis; N(2)-acetyl-L-ornithine from L-glutamate: step 2/4. Catalyzes the ATP-dependent phosphorylation of N-acetyl-L-glutamate. This chain is Acetylglutamate kinase, found in Hahella chejuensis (strain KCTC 2396).